The following is an 847-amino-acid chain: KN motif and ankyrin repeat domain-containing protein 2 (847 aa).

Residues 1 to 32 (MAQVLHVPAPFPGTPGQASSAAFPNKEPDPPY) form a disordered region. An interaction with AIFM1 region spans residues 1–72 (MAQVLHVPAP…PVQRRPRLGS (72 aa)). Phosphoserine is present on residues serine 19, serine 83, serine 86, serine 89, and serine 92. An Omega-N-methylarginine modification is found at arginine 105. Positions 161–182 (LAGVGLLPPTPRSSGLSTPVAP) are disordered. Residue threonine 170 is modified to Phosphothreonine. 2 coiled-coil regions span residues 187–207 (LAHVREQMAGALRKLRQLEEQ) and 284–311 (EAALVAKVAVLETQLKKALQELRAAQTQ). Threonine 331 is modified (phosphothreonine). Serine 358 bears the Phosphoserine mark. Disordered stretches follow at residues 414–473 (GAAR…GGAS) and 502–581 (NGGY…PEEE). Residues 420 to 433 (DPPPSPAEPSPSSP) are compositionally biased toward pro residues. Low complexity-rich tracts occupy residues 434–446 (YPAAEPENPAPAA) and 506–516 (ESSSEDSSTAE). Serine 536 is modified (phosphoserine). Residues 610-647 (RELKVAYTTVLQEWLRLACRSDAHPELVRRHLVTFRAM) form an ANK 0; degenerate repeat. ANK repeat units follow at residues 662 to 692 (NGNTALHYSVSHANFPVVRQLLDSGVCQVDK), 696 to 729 (AGYSPIMLTALATLKTQDDIDTILQLFRLGNVNA), 734 to 763 (AGQTALMLAVSHGRVDVVKALLACEVDVNM), 767 to 797 (DGSTALMCACEHGHKEITGLLLAVPSCDISL), and 801 to 831 (DGSTALMVALDAGQSEIASMLYSRMNIKCSF). The interval 665 to 831 (TALHYSVSHA…YSRMNIKCSF (167 aa)) is interaction with NCOA1.

In terms of assembly, interacts (non-phosphorylated form) with NCOA1; NCOA2 AND NCOA3. Interacts with AIFM1. Interacts with ARHGDIA; the interaction is direct and may regulate the interaction of ARHGDIA with RHOA, RAC1 and CDC42. Interacts (via ANK repeats 1-5) with KIF21A. Post-translationally, phosphorylated by casein kinase II upon estrogen stimulation. Phosphorylation induces the release by KANK2 of NCOA1 and its translocation to the nucleus where NCOA1 can activate gene transcription. Expressed by podocytes in kidney glomeruli (at protein level).

The protein localises to the cytoplasm. Its subcellular location is the mitochondrion. Involved in transcription regulation by sequestering in the cytoplasm nuclear receptor coactivators such as NCOA1, NCOA2 and NCOA3. Involved in regulation of caspase-independent apoptosis by sequestering the proapoptotic factor AIFM1 in mitochondria. Pro-apoptotic stimuli can induce its proteasomal degradation allowing the translocation of AIFM1 to the nucleus to induce apoptosis. Involved in the negative control of vitamin D receptor signaling pathway. Involved in actin stress fibers formation through its interaction with ARHGDIA and the regulation of the Rho signaling pathway. May thereby play a role in cell adhesion and migration, regulating for instance podocytes migration during development of the kidney. Through the Rho signaling pathway may also regulate cell proliferation. The chain is KN motif and ankyrin repeat domain-containing protein 2 from Rattus norvegicus (Rat).